The chain runs to 114 residues: Nucleoid-associated protein NT01CX_0824 (114 aa).

The protein belongs to the YbaB/EbfC family. As to quaternary structure, homodimer.

The protein localises to the cytoplasm. It localises to the nucleoid. Binds to DNA and alters its conformation. May be involved in regulation of gene expression, nucleoid organization and DNA protection. This chain is Nucleoid-associated protein NT01CX_0824, found in Clostridium novyi (strain NT).